The primary structure comprises 478 residues: Leukotoxin secretion protein D (478 aa).

At 1–77 (MKIWLSGIYE…LAVAIVLASV (77 aa)) the chain is on the cytoplasmic side. A helical membrane pass occupies residues 78-98 (SKVEIVATAPGKLTFSGRSKE). The Periplasmic segment spans residues 99–478 (IKPIENTIVQ…ESVTESLRER (380 aa)).

Belongs to the membrane fusion protein (MFP) (TC 8.A.1) family.

The protein resides in the cell inner membrane. In terms of biological role, involved in the transport of the Leukotoxin. The sequence is that of Leukotoxin secretion protein D (lktD) from Pasteurella haemolytica-like sp. (strain 5943B).